The following is a 201-amino-acid chain: Kinetochore protein SPC24 homolog (201 aa).

Residues 78–133 (DIAAEDEIERLQKELDEEMEREFKLKDELRLVADELKDLNAQLSSIDEHKQSTKRK) are a coiled coil.

It belongs to the SPC24 family. As to quaternary structure, component of the NDC80 complex, which consists of NDC80, NUF2, SPC24 and SPC25. Highly expressed in actively dividing tissues, such as shoot apical meristem (SAM), root apical meristem (RAM), vasculature, newly emerging leaves and inflorescence shoots.

It localises to the chromosome. The protein localises to the centromere. Its function is as follows. Acts as a component of the essential kinetochore-associated NDC80 complex, which is required for chromosome segregation and spindle checkpoint activity to ensure proper cell division. Required for the maintenance of plant architecture. The polypeptide is Kinetochore protein SPC24 homolog (Arabidopsis thaliana (Mouse-ear cress)).